A 184-amino-acid chain; its full sequence is ADP-ribosylation factor 6 (184 aa).

Residue Gly-2 is the site of N-myristoyl glycine attachment. Residues 28 to 35 (GLDAAGKT), 71 to 75 (DVGGQ), and 130 to 133 (NKQD) contribute to the GTP site.

This sequence belongs to the small GTPase superfamily. Arf family.

It is found in the cell membrane. Functionally, GTP-binding protein that functions as a molecular switch for the activation of 'new end take off' (NETO), a process in which the directions of cell growth change from a monopolar manner to a bipolar manner in fission yeast. Involved in supplying membrane to the growing new end. This Schizosaccharomyces pombe (strain 972 / ATCC 24843) (Fission yeast) protein is ADP-ribosylation factor 6 (arf6).